Consider the following 259-residue polypeptide: Imidazole glycerol phosphate synthase subunit HisF (259 aa).

Active-site residues include aspartate 11 and aspartate 130.

It belongs to the HisA/HisF family. As to quaternary structure, heterodimer of HisH and HisF.

It is found in the cytoplasm. The catalysed reaction is 5-[(5-phospho-1-deoxy-D-ribulos-1-ylimino)methylamino]-1-(5-phospho-beta-D-ribosyl)imidazole-4-carboxamide + L-glutamine = D-erythro-1-(imidazol-4-yl)glycerol 3-phosphate + 5-amino-1-(5-phospho-beta-D-ribosyl)imidazole-4-carboxamide + L-glutamate + H(+). Its pathway is amino-acid biosynthesis; L-histidine biosynthesis; L-histidine from 5-phospho-alpha-D-ribose 1-diphosphate: step 5/9. In terms of biological role, IGPS catalyzes the conversion of PRFAR and glutamine to IGP, AICAR and glutamate. The HisF subunit catalyzes the cyclization activity that produces IGP and AICAR from PRFAR using the ammonia provided by the HisH subunit. The protein is Imidazole glycerol phosphate synthase subunit HisF of Shewanella amazonensis (strain ATCC BAA-1098 / SB2B).